Reading from the N-terminus, the 242-residue chain is Zinc import ATP-binding protein ZnuC (242 aa).

The ABC transporter domain maps to Ile24 to Tyr241. Gly56–Thr63 is an ATP binding site.

Belongs to the ABC transporter superfamily. Zinc importer (TC 3.A.1.15.5) family. The complex is composed of two ATP-binding proteins (ZnuC), two transmembrane proteins (ZnuB) and a solute-binding protein (ZnuA).

Its subcellular location is the cell inner membrane. It catalyses the reaction Zn(2+)(out) + ATP(in) + H2O(in) = Zn(2+)(in) + ADP(in) + phosphate(in) + H(+)(in). Part of the ABC transporter complex ZnuABC involved in zinc import. Responsible for energy coupling to the transport system. The sequence is that of Zinc import ATP-binding protein ZnuC from Ehrlichia canis (strain Jake).